The chain runs to 253 residues: Probable glutathione transferase omega-2 (253 aa).

In terms of domain architecture, GST N-terminal spans 25–105; it reads GIYRIYNMRF…YLDDLFPESR (81 aa). Residue Cys35 is the Nucleophile of the active site. Residues Lys62, Val75, and 89-90 contribute to the glutathione site; that span reads ES. The GST C-terminal domain maps to 110–238; that stretch reads DPYEKVQQKL…SQPTEMGVGF (129 aa).

This sequence belongs to the GST superfamily. Omega family.

It catalyses the reaction RX + glutathione = an S-substituted glutathione + a halide anion + H(+). The enzyme catalyses L-dehydroascorbate + 2 glutathione = glutathione disulfide + L-ascorbate. It carries out the reaction methylarsonate + 2 glutathione + H(+) = methylarsonous acid + glutathione disulfide + H2O. Its function is as follows. Exhibits glutathione-dependent thiol transferase activity. Has dehydroascorbate reductase activity and may contribute to the recycling of ascorbic acid. Participates in the biotransformation of inorganic arsenic and reduces monomethylarsonic acid (MMA). This Caenorhabditis briggsae protein is Probable glutathione transferase omega-2.